Consider the following 491-residue polypeptide: Keratin, type I cytoskeletal 24 (491 aa).

The tract at residues 1–23 (MFCSAQKGSCSSRVSSSGAVGSR) is disordered. Residues 1 to 117 (MFCSAQKGSC…GYDGGLLSGS (117 aa)) are head. Low complexity predominate over residues 8 to 23 (GSCSSRVSSSGAVGSR). Residues 118–153 (EKQTMQGLNDRLANYLDKVRALEEANTDLETKIKDW) are coil 1A. The 315-residue stretch at 118 to 432 (EKQTMQGLND…RLLNGDGGGC (315 aa)) folds into the IF rod domain. Residues 154 to 174 (YGRHGSGKDGPGRDYSQYCSV) form a linker 1 region. The coil 1B stretch occupies residues 175 to 266 (IEDLKNQIIS…KNHEEEMKCL (92 aa)). Positions 267–289 (QGSSGGDVTVEMNATPGTDLTKL) are linker 12. The coil 2 stretch occupies residues 290 to 428 (LNDMRAQYEA…ETYRRLLNGD (139 aa)). A tail region spans residues 429 to 491 (GGGCDYRNLV…VSNISEVKIK (63 aa)).

The protein belongs to the intermediate filament family. In terms of assembly, heterotetramer of two type I and two type II keratins.

This is Keratin, type I cytoskeletal 24 (Krt24) from Rattus norvegicus (Rat).